Here is a 422-residue protein sequence, read N- to C-terminus: Vitamin D3 receptor (422 aa).

The nuclear receptor DNA-binding region spans proline 22–methionine 90. Residues cysteine 25, cysteine 28, cysteine 42, cysteine 45, cysteine 61, cysteine 67, cysteine 77, and cysteine 80 each coordinate Zn(2+). 2 consecutive NR C4-type zinc fingers follow at residues cysteine 25 to cysteine 45 and cysteine 61 to cysteine 85. The hinge stretch occupies residues aspartate 98–aspartate 127. The NR LBD domain occupies glutamate 128–serine 418. Positions arginine 170 to proline 191 are disordered. A calcitriol-binding site is contributed by serine 232. An interaction with coactivator LXXLL motif region spans residues lysine 241–lysine 259. Arginine 269, serine 273, histidine 300, and histidine 392 together coordinate calcitriol. A 9aaTAD motif is present at residues proline 411–aspartate 419.

The protein belongs to the nuclear hormone receptor family. NR1 subfamily. In terms of assembly, homodimer in the absence of bound vitamin D3. Heterodimer with RXRA after vitamin D3 binding. Detected in all tissues examined. Highest level in small intestine and skin.

Its subcellular location is the nucleus. It is found in the cytoplasm. Its function is as follows. Nuclear receptor for calcitriol, the active form of vitamin D3 which mediates the action of this vitamin on cells. Enters the nucleus upon vitamin D3 binding where it forms heterodimers with the retinoid X receptor/RXR. The VDR-RXR heterodimers bind to specific response elements on DNA and activate the transcription of vitamin D3-responsive target genes. Plays a central role in calcium homeostasis. Also functions as a receptor for the secondary bile acid lithocholic acid (LCA) and its metabolites. In Xenopus laevis (African clawed frog), this protein is Vitamin D3 receptor (vdr).